We begin with the raw amino-acid sequence, 484 residues long: Sperm motility kinase 1 (484 aa).

The Protein kinase domain maps to 8–256; it reads YEMLETIGQG…VAEVMVHPWI (249 aa). Residues 14–22 and lysine 37 contribute to the ATP site; that span reads IGQGGCAKV. The active-site Proton acceptor is the aspartate 127. The UBA domain occupies 274-314; the sequence is KPDPAIVKPMGHIGFQAQDIEDSLRQRKFNETMASYCLLKK. A compositionally biased stretch (polar residues) spans 423 to 434; that stretch reads IDESTEGHTSAS. Residues 423–447 are disordered; it reads IDESTEGHTSASAEDKPVHSRGWPR.

Belongs to the protein kinase superfamily. Tyr protein kinase family. Smok subfamily. As to expression, testis-specific. Expressed in the testis from 22 days postpartum (22 dpp).

The catalysed reaction is L-seryl-[protein] + ATP = O-phospho-L-seryl-[protein] + ADP + H(+). It carries out the reaction L-threonyl-[protein] + ATP = O-phospho-L-threonyl-[protein] + ADP + H(+). Functionally, may play a role in sperm motility, especially in the regulation of flagellar function. The protein is Sperm motility kinase 1 (Smok1) of Mus musculus (Mouse).